The primary structure comprises 388 residues: Cystathionine gamma-synthase (388 aa).

Lysine 208 is modified (N6-(pyridoxal phosphate)lysine).

Belongs to the trans-sulfuration enzymes family. In terms of assembly, homotetramer. Pyridoxal 5'-phosphate is required as a cofactor.

It localises to the cytoplasm. The catalysed reaction is O-succinyl-L-homoserine + L-cysteine = L,L-cystathionine + succinate + H(+). Catalyzes the formation of L-cystathionine from O-succinyl-L-homoserine (OSHS) and L-cysteine, via a gamma-replacement reaction. In the absence of thiol, catalyzes gamma-elimination to form 2-oxobutanoate, succinate and ammonia. In Mycobacterium leprae (strain TN), this protein is Cystathionine gamma-synthase (metB).